Reading from the N-terminus, the 438-residue chain is 3-phosphoshikimate 1-carboxyvinyltransferase (438 aa).

Residues lysine 20, serine 21, and arginine 25 each contribute to the 3-phosphoshikimate site. Residue lysine 20 participates in phosphoenolpyruvate binding. Residues glycine 90 and arginine 118 each coordinate phosphoenolpyruvate. The 3-phosphoshikimate site is built by serine 163, serine 164, glutamine 165, serine 191, aspartate 320, and lysine 347. Glutamine 165 is a phosphoenolpyruvate binding site. Aspartate 320 (proton acceptor) is an active-site residue. The phosphoenolpyruvate site is built by arginine 351 and arginine 392.

The protein belongs to the EPSP synthase family. In terms of assembly, monomer.

It localises to the cytoplasm. The enzyme catalyses 3-phosphoshikimate + phosphoenolpyruvate = 5-O-(1-carboxyvinyl)-3-phosphoshikimate + phosphate. The protein operates within metabolic intermediate biosynthesis; chorismate biosynthesis. Catalyzes the transfer of the enolpyruvyl moiety of phosphoenolpyruvate (PEP) to the 5-hydroxyl of shikimate-3-phosphate (S3P) to produce enolpyruvyl shikimate-3-phosphate and inorganic phosphate. In Natronomonas pharaonis (strain ATCC 35678 / DSM 2160 / CIP 103997 / JCM 8858 / NBRC 14720 / NCIMB 2260 / Gabara) (Halobacterium pharaonis), this protein is 3-phosphoshikimate 1-carboxyvinyltransferase.